The sequence spans 547 residues: Chaperonin GroEL (547 aa).

ATP-binding positions include 30 to 33 (TLGP), Lys51, 87 to 91 (DGTTT), Gly415, 479 to 481 (NAA), and Asp495.

Belongs to the chaperonin (HSP60) family. As to quaternary structure, forms a cylinder of 14 subunits composed of two heptameric rings stacked back-to-back. Interacts with the co-chaperonin GroES.

The protein localises to the cytoplasm. It carries out the reaction ATP + H2O + a folded polypeptide = ADP + phosphate + an unfolded polypeptide.. Together with its co-chaperonin GroES, plays an essential role in assisting protein folding. The GroEL-GroES system forms a nano-cage that allows encapsulation of the non-native substrate proteins and provides a physical environment optimized to promote and accelerate protein folding. This is Chaperonin GroEL from Cupriavidus pinatubonensis (strain JMP 134 / LMG 1197) (Cupriavidus necator (strain JMP 134)).